A 204-amino-acid chain; its full sequence is Putative 3-methyladenine DNA glycosylase (204 aa).

It belongs to the DNA glycosylase MPG family.

The protein is Putative 3-methyladenine DNA glycosylase of Bacillus cytotoxicus (strain DSM 22905 / CIP 110041 / 391-98 / NVH 391-98).